We begin with the raw amino-acid sequence, 599 residues long: Proline--tRNA ligase (599 aa).

This sequence belongs to the class-II aminoacyl-tRNA synthetase family. ProS type 1 subfamily. As to quaternary structure, homodimer.

The protein resides in the cytoplasm. The catalysed reaction is tRNA(Pro) + L-proline + ATP = L-prolyl-tRNA(Pro) + AMP + diphosphate. In terms of biological role, catalyzes the attachment of proline to tRNA(Pro) in a two-step reaction: proline is first activated by ATP to form Pro-AMP and then transferred to the acceptor end of tRNA(Pro). As ProRS can inadvertently accommodate and process non-cognate amino acids such as alanine and cysteine, to avoid such errors it has two additional distinct editing activities against alanine. One activity is designated as 'pretransfer' editing and involves the tRNA(Pro)-independent hydrolysis of activated Ala-AMP. The other activity is designated 'posttransfer' editing and involves deacylation of mischarged Ala-tRNA(Pro). The misacylated Cys-tRNA(Pro) is not edited by ProRS. The polypeptide is Proline--tRNA ligase (Prochlorococcus marinus (strain MIT 9303)).